A 286-amino-acid chain; its full sequence is Protein HEXIM2 (286 aa).

Positions 1-11 are enriched in polar residues; it reads MMATPNQTACN. A disordered region spans residues 1 to 195; it reads MMATPNQTAC…GEFQRKDFSE (195 aa). S29 is subject to Phosphoserine. T32 carries the phosphothreonine modification. S39 is modified (phosphoserine). Residue T46 is modified to Phosphothreonine. Residues S51, S53, S71, S76, and S81 each carry the phosphoserine modification. A compositionally biased stretch (polar residues) spans 68-78; that stretch reads NSRSPRTQSPG. Over residues 87–103 the composition is skewed to basic residues; sequence ARKKHRRRPSKRKRHWR. The segment covering 113–132 has biased composition (basic and acidic residues); the sequence is KQQRDERQSQRASRVREEMF. The interaction with P-TEFb stretch occupies residues 140-143; it reads PYNT. Residues 178–195 show a composition bias toward basic and acidic residues; sequence SDGRGRAHGEFQRKDFSE. Residues 207-277 are a coiled coil; the sequence is GRSKQELVRD…QENQMWNREG (71 aa). The interval 226–286 is interaction with CCNT1, HEXIM1 and HEXIM2; sequence QAEEETRRLQ…GCRCDEEPGT (61 aa).

The protein belongs to the HEXIM family. Homooligomer and heterooligomer with HEXIM1; probably dimeric. Core component of the 7SK RNP complex, at least composed of 7SK RNA, LARP7, MEPCE, HEXIM1 (or HEXIM2) and P-TEFb (composed of CDK9 and CCNT1/cyclin-T1). Interacts with CCNT2. Ubiquitously expressed with higher expression in testis. HEXIM1 and HEXIM2 are differentially expressed.

The protein localises to the nucleus. Functionally, transcriptional regulator which functions as a general RNA polymerase II transcription inhibitor. Core component of the 7SK RNP complex: in cooperation with 7SK snRNA sequesters P-TEFb in a large inactive 7SK snRNP complex preventing RNA polymerase II phosphorylation and subsequent transcriptional elongation. This chain is Protein HEXIM2 (HEXIM2), found in Homo sapiens (Human).